A 1280-amino-acid chain; its full sequence is Clustered mitochondria protein homolog (1280 aa).

Polar residues predominate over residues 1–27 (MAASSNDASKSAMANSNVTTEVAQTPS). Disordered regions lie at residues 1 to 49 (MAAS…GQLP) and 169 to 189 (GLDQ…LADY). A compositionally biased stretch (acidic residues) spans 32 to 43 (VNGEVEATEEDG). One can recognise a Clu domain in the interval 338 to 582 (DLARTQESYL…RLTPLDVAWI (245 aa)). Disordered regions lie at residues 633–669 (KANK…EPEQ), 905–943 (GAAV…AVSL), and 1214–1280 (TGRN…TQKP). The span at 635 to 648 (NKARGGRRRLPKAQ) shows a compositional bias: basic residues. A compositionally biased stretch (basic and acidic residues) spans 649–669 (KKADAGKEVDGEKKAEAEPEQ). Positions 1221 to 1235 (PAAATPSVSDAAAAA) are enriched in low complexity. The span at 1245–1261 (VDQRKIEDLLKYIEGES) shows a compositional bias: basic and acidic residues. The span at 1265–1280 (PTKKRTQNPRKRTQKP) shows a compositional bias: basic residues.

It belongs to the CLU family. In terms of assembly, may associate with the eukaryotic translation initiation factor 3 (eIF-3) complex.

It is found in the cytoplasm. MRNA-binding protein involved in proper cytoplasmic distribution of mitochondria. This Phaeosphaeria nodorum (strain SN15 / ATCC MYA-4574 / FGSC 10173) (Glume blotch fungus) protein is Clustered mitochondria protein homolog.